The following is a 70-amino-acid chain: Melittin-N (70 aa).

The first 21 residues, methionine 1–alanine 21, serve as a signal peptide directing secretion. The propeptide at alanine 22–alanine 43 is removed by a dipeptidylpeptidase. Glycine 44 is modified (N-formylglycine; partial). Glutamine 69 carries the glutamine amide modification.

This sequence belongs to the melittin family. Monomer (in solution and for integration into membranes), homotetramer (in solution and potentially as a toroidal pore in membranes), and potenially homomultimer (as a toroidal pore in membranes). In terms of tissue distribution, expressed by the venom gland.

The protein localises to the secreted. The protein resides in the target cell membrane. In terms of biological role, main toxin of bee venom with strong hemolytic activity and antimicrobial activity. It has enhancing effects on bee venom phospholipase A2 activity. This amphipathic toxin binds to negatively charged membrane surface and forms pore by inserting into lipid bilayers inducing the leakage of ions and molecules and the enhancement of permeability that ultimately leads to cell lysis. It acts as a voltage-gated pore with higher selectivity for anions over cations. The ion conductance has been shown to be voltage-dependent. Self-association of melittin in membranes is promoted by high ionic strength, but not by the presence of negatively charged lipids. In vivo, intradermal injection into healthy human volunteers produce sharp pain sensation and an inflammatory response. It produces pain by activating primary nociceptor cells directly and indirectly due to its ability to activate plasma membrane phospholipase A2 and its pore-forming activity. Shows lower cytotoxicity when tested on E.coli and cancer cell lines than melittin, as well as lower anti-inflammatory properties and lower properties to interact to small unilamellar liposomes. The chain is Melittin-N (MELT) from Apis cerana (Indian honeybee).